The following is a 912-amino-acid chain: Metabotropic glutamate receptor 4 (912 aa).

Positions 1–32 (MSGKGGWAWWWARLPLCLLLSLYAPWVPSSLG) are cleaved as a signal peptide. Residues 33 to 587 (KPKGHPHMNS…IVKLEWDSPW (555 aa)) lie on the Extracellular side of the membrane. The cysteines at positions 67 and 109 are disulfide-linked. N-linked (GlcNAc...) asparagine glycosylation occurs at asparagine 98. Residues serine 159, 180-182 (AST), and tyrosine 230 contribute to the L-glutamate site. Intrachain disulfides connect cysteine 249/cysteine 538, cysteine 372/cysteine 388, cysteine 428/cysteine 435, cysteine 520/cysteine 539, cysteine 524/cysteine 542, cysteine 545/cysteine 557, and cysteine 560/cysteine 573. The N-linked (GlcNAc...) asparagine glycan is linked to asparagine 301. Aspartate 312 lines the L-glutamate pocket. Lysine 405 provides a ligand contact to L-glutamate. N-linked (GlcNAc...) asparagine glycans are attached at residues asparagine 454 and asparagine 484. N-linked (GlcNAc...) asparagine glycosylation is present at asparagine 569. Residues 588–610 (AVLPLFLAVVGIAATLFVVVTFV) form a helical membrane-spanning segment. At 611-624 (RYNDTPIVKASGRE) the chain is on the cytoplasmic side. Residues 625-645 (LSYVLLAGIFLCYATTFLMIA) traverse the membrane as a helical segment. Over 646-656 (EPDLGTCSLRR) the chain is Extracellular. The chain crosses the membrane as a helical span at residues 657–675 (IFLGLGMSISYAALLTKTN). Over 676–699 (RIYRIFEQGKRSVSAPRFISPASQ) the chain is Cytoplasmic. A helical membrane pass occupies residues 700–720 (LAITFILISLQLLGICVWFVV). The Extracellular portion of the chain corresponds to 721–750 (DPSHSVVDFQDQRTLDPRFARGVLKCDISD). The helical transmembrane segment at 751–772 (LSLICLLGYSMLLMVTCTVYAI) threads the bilayer. The Cytoplasmic segment spans residues 773 to 785 (KTRGVPETFNEAK). Residues 786-808 (PIGFTMYTTCIVWLAFIPIFFGT) traverse the membrane as a helical segment. Topologically, residues 809 to 821 (SQSADKLYIQTTT) are extracellular. The helical transmembrane segment at 822 to 847 (LTVSVSLSASVSLGMLYMPKVYIILF) threads the bilayer. Residues 848–912 (HPEQNVPKRK…TYVTYTNHAI (65 aa)) are Cytoplasmic-facing.

The protein belongs to the G-protein coupled receptor 3 family. Interacts with PICK1. As to expression, is widely distributed in the CNS. Predominant expression is seen in the granule cells of the cerebellum.

The protein localises to the cell membrane. Functionally, G-protein coupled receptor for glutamate. Ligand binding causes a conformation change that triggers signaling via guanine nucleotide-binding proteins (G proteins) and modulates the activity of down-stream effectors. Signaling inhibits adenylate cyclase activity. This chain is Metabotropic glutamate receptor 4 (Grm4), found in Rattus norvegicus (Rat).